A 321-amino-acid polypeptide reads, in one-letter code: Ribosomal RNA small subunit methyltransferase H (321 aa).

Residues Gly34–His36, Asp54, Phe80, Asp102, and Gln109 contribute to the S-adenosyl-L-methionine site.

The protein belongs to the methyltransferase superfamily. RsmH family.

It is found in the cytoplasm. It carries out the reaction cytidine(1402) in 16S rRNA + S-adenosyl-L-methionine = N(4)-methylcytidine(1402) in 16S rRNA + S-adenosyl-L-homocysteine + H(+). In terms of biological role, specifically methylates the N4 position of cytidine in position 1402 (C1402) of 16S rRNA. In Blochmanniella floridana, this protein is Ribosomal RNA small subunit methyltransferase H.